Consider the following 531-residue polypeptide: Splicing factor ESS-2 (531 aa).

Disordered regions lie at residues 104 to 163 and 453 to 531; these read RTPI…RKKK and PFAS…GDFF. The segment covering 105-114 has biased composition (polar residues); the sequence is TPITTRSTTE. 2 stretches are compositionally biased toward low complexity: residues 125-136 and 464-477; these read TPGPSSASTSSA and SRPS…TPGS. Positions 480–498 are enriched in polar residues; that stretch reads SRGSTTPGSSWSQGAQTPG.

This sequence belongs to the ESS2 family.

Its subcellular location is the nucleus. Regulates pre-mRNA splicing. This Caenorhabditis elegans protein is Splicing factor ESS-2 (ess-2).